Reading from the N-terminus, the 299-residue chain is Undecaprenyl-diphosphatase (299 aa).

The next 8 helical transmembrane spans lie at L10–V32, P63–F83, L112–W132, L143–F163, G178–S198, A213–L233, G243–I263, and W276–G296.

The protein belongs to the UppP family.

It is found in the cell inner membrane. It catalyses the reaction di-trans,octa-cis-undecaprenyl diphosphate + H2O = di-trans,octa-cis-undecaprenyl phosphate + phosphate + H(+). Functionally, catalyzes the dephosphorylation of undecaprenyl diphosphate (UPP). Confers resistance to bacitracin. The sequence is that of Undecaprenyl-diphosphatase from Prochlorococcus marinus (strain MIT 9313).